A 320-amino-acid chain; its full sequence is Olfactory receptor 7C1 (320 aa).

At Met-1–Phe-25 the chain is on the extracellular side. An N-linked (GlcNAc...) asparagine glycan is attached at Asn-5. A helical transmembrane segment spans residues Ile-26–Ile-46. Topologically, residues Leu-47–His-54 are cytoplasmic. A helical membrane pass occupies residues Leu-55–Ser-75. Residues Thr-76 to Ser-99 are Extracellular-facing. The cysteines at positions 97 and 189 are disulfide-linked. Residues Gln-100–Tyr-120 form a helical membrane-spanning segment. The Cytoplasmic portion of the chain corresponds to Asp-121–Gln-139. Residues Leu-140–Thr-160 traverse the membrane as a helical segment. Topologically, residues Leu-161–Val-197 are extracellular. Residues Val-198–Ser-217 traverse the membrane as a helical segment. Over Tyr-218–Ala-237 the chain is Cytoplasmic. A helical transmembrane segment spans residues Phe-238 to Val-258. At Tyr-259–Ser-271 the chain is on the extracellular side. Residues Leu-272–Leu-292 form a helical membrane-spanning segment. Topologically, residues Arg-293 to Gly-313 are cytoplasmic.

This sequence belongs to the G-protein coupled receptor 1 family.

It is found in the cell membrane. In terms of biological role, odorant receptor. This Homo sapiens (Human) protein is Olfactory receptor 7C1 (OR7C1).